A 60-amino-acid polypeptide reads, in one-letter code: Cytotoxin 4 (60 aa).

Disulfide bonds link Cys-3–Cys-21, Cys-14–Cys-38, Cys-42–Cys-53, and Cys-54–Cys-59.

This sequence belongs to the three-finger toxin family. Short-chain subfamily. Type IA cytotoxin sub-subfamily. As to quaternary structure, monomer in solution; Homodimer and oligomer in the presence of negatively charged lipids forming a pore with a size ranging between 20 and 30 Angstroms. As to expression, expressed by the venom gland.

Its subcellular location is the secreted. The protein resides in the target cell membrane. Its function is as follows. Shows cytolytic activity on many different cells by forming pore in lipid membranes. In vivo, increases heart rate or kills the animal by cardiac arrest. In addition, it binds to heparin with high affinity, interacts with Kv channel-interacting protein 1 (KCNIP1) in a calcium-independent manner, and binds to integrin alpha-V/beta-3 (ITGAV/ITGB3) with moderate affinity. The chain is Cytotoxin 4 from Naja annulifera (Banded Egyptian cobra).